The chain runs to 242 residues: tRNA pseudouridine synthase A (242 aa).

Residue Asp-51 is the Nucleophile of the active site. Tyr-107 contributes to the substrate binding site.

It belongs to the tRNA pseudouridine synthase TruA family. As to quaternary structure, homodimer.

The enzyme catalyses uridine(38/39/40) in tRNA = pseudouridine(38/39/40) in tRNA. In terms of biological role, formation of pseudouridine at positions 38, 39 and 40 in the anticodon stem and loop of transfer RNAs. This is tRNA pseudouridine synthase A from Helicobacter acinonychis (strain Sheeba).